The chain runs to 99 residues: L-rhamnose mutarotase (99 aa).

Substrate is bound at residue tyrosine 18. Histidine 22 (proton donor) is an active-site residue. Substrate is bound by residues tyrosine 41 and 76–77; that span reads WW.

Belongs to the rhamnose mutarotase family. In terms of assembly, homodimer.

It is found in the cytoplasm. It carries out the reaction alpha-L-rhamnose = beta-L-rhamnose. Its pathway is carbohydrate metabolism; L-rhamnose metabolism. Its function is as follows. Involved in the anomeric conversion of L-rhamnose. The protein is L-rhamnose mutarotase of Shigella boydii serotype 18 (strain CDC 3083-94 / BS512).